The primary structure comprises 183 residues: Holliday junction branch migration complex subunit RuvA (183 aa).

Positions Met1–Leu63 are domain I. The segment at Glu64–Asn141 is domain II. Asn141 is a region of interest (flexible linker). Residues Asn141–Ser183 form a domain III region.

The protein belongs to the RuvA family. In terms of assembly, homotetramer. Forms an RuvA(8)-RuvB(12)-Holliday junction (HJ) complex. HJ DNA is sandwiched between 2 RuvA tetramers; dsDNA enters through RuvA and exits via RuvB. An RuvB hexamer assembles on each DNA strand where it exits the tetramer. Each RuvB hexamer is contacted by two RuvA subunits (via domain III) on 2 adjacent RuvB subunits; this complex drives branch migration. In the full resolvosome a probable DNA-RuvA(4)-RuvB(12)-RuvC(2) complex forms which resolves the HJ.

The protein resides in the cytoplasm. The RuvA-RuvB-RuvC complex processes Holliday junction (HJ) DNA during genetic recombination and DNA repair, while the RuvA-RuvB complex plays an important role in the rescue of blocked DNA replication forks via replication fork reversal (RFR). RuvA specifically binds to HJ cruciform DNA, conferring on it an open structure. The RuvB hexamer acts as an ATP-dependent pump, pulling dsDNA into and through the RuvAB complex. HJ branch migration allows RuvC to scan DNA until it finds its consensus sequence, where it cleaves and resolves the cruciform DNA. This Helicobacter acinonychis (strain Sheeba) protein is Holliday junction branch migration complex subunit RuvA.